The following is a 331-amino-acid chain: Heat-inducible transcription repressor HrcA (331 aa).

Belongs to the HrcA family.

Its function is as follows. Negative regulator of class I heat shock genes (grpE-dnaK-dnaJ and groELS operons). Prevents heat-shock induction of these operons. This chain is Heat-inducible transcription repressor HrcA, found in Synechococcus sp. (strain WH7803).